The sequence spans 303 residues: GTPase Era (303 aa).

The 168-residue stretch at 7–174 folds into the Era-type G domain; sequence KSGFVAILGR…IDTLSEKLDE (168 aa). The tract at residues 15–22 is G1; the sequence is GRPNVGKS. Position 15–22 (15–22) interacts with GTP; that stretch reads GRPNVGKS. The interval 41 to 45 is G2; the sequence is QTTRN. The G3 stretch occupies residues 62–65; that stretch reads DTPG. GTP contacts are provided by residues 62–66 and 124–127; these read DTPGI and NKID. Positions 124-127 are G4; that stretch reads NKID. The segment at 153 to 155 is G5; the sequence is ISA. The KH type-2 domain occupies 205–283; it reads TREEVPHSIA…YLETWVKIKN (79 aa).

It belongs to the TRAFAC class TrmE-Era-EngA-EngB-Septin-like GTPase superfamily. Era GTPase family. In terms of assembly, monomer.

It is found in the cytoplasm. Its subcellular location is the cell membrane. Its function is as follows. An essential GTPase that binds both GDP and GTP, with rapid nucleotide exchange. Plays a role in 16S rRNA processing and 30S ribosomal subunit biogenesis and possibly also in cell cycle regulation and energy metabolism. This Lactococcus lactis subsp. lactis (strain IL1403) (Streptococcus lactis) protein is GTPase Era.